A 546-amino-acid chain; its full sequence is DDB1- and CUL4-associated factor 11 (546 aa).

The span at 1–10 (MGSRNSSSAG) shows a compositional bias: polar residues. The disordered stretch occupies residues 1-40 (MGSRNSSSAGTGSGDPSEGLPRRGAGLRRSEEEEEEDEDV). Ser-73 and Ser-75 each carry phosphoserine. A disordered region spans residues 79 to 100 (HDSAWDGRLGDRYNPPVDATPD). Residues 80–89 (DSAWDGRLGD) are compositionally biased toward basic and acidic residues. WD repeat units follow at residues 170–210 (TYSQ…RKFK), 216–258 (DVGW…TALD), 263–302 (ERRF…RTLQ), 305–345 (SHED…EDDP), 353–392 (GHQD…SREG), 435–480 (GVLH…KKLT), and 481–520 (THKA…YFQD). Residues 521–546 (DMPESEEHPSTPAPMSHPSTAFSSPQ) form a disordered region. The span at 537 to 546 (HPSTAFSSPQ) shows a compositional bias: polar residues.

As to quaternary structure, interacts with DDB1 and CUL4A.

Its pathway is protein modification; protein ubiquitination. Its function is as follows. May function as a substrate receptor for CUL4-DDB1 E3 ubiquitin-protein ligase complex. This Bos taurus (Bovine) protein is DDB1- and CUL4-associated factor 11 (DCAF11).